The primary structure comprises 195 residues: Imidazoleglycerol-phosphate dehydratase (195 aa).

It belongs to the imidazoleglycerol-phosphate dehydratase family.

Its subcellular location is the cytoplasm. It carries out the reaction D-erythro-1-(imidazol-4-yl)glycerol 3-phosphate = 3-(imidazol-4-yl)-2-oxopropyl phosphate + H2O. The protein operates within amino-acid biosynthesis; L-histidine biosynthesis; L-histidine from 5-phospho-alpha-D-ribose 1-diphosphate: step 6/9. The polypeptide is Imidazoleglycerol-phosphate dehydratase (Aminomonas aminovorus).